The primary structure comprises 196 residues: uncharacterized protein (196 aa).

Over residues 21–35 (ESRRKDGSVRRERAV) the composition is skewed to basic and acidic residues. Disordered regions lie at residues 21 to 53 (ESRR…PGRG) and 65 to 196 (LQLS…KEKE). Positions 66–75 (QLSNDASTSK) are enriched in polar residues. Basic and acidic residues-rich tracts occupy residues 84-94 (ELEKEKLERPL), 100-143 (EKND…KDFK), and 173-196 (KMSK…KEKE).

This is an uncharacterized protein from Schizosaccharomyces pombe (strain 972 / ATCC 24843) (Fission yeast).